A 271-amino-acid polypeptide reads, in one-letter code: 1,4-dihydroxy-2-naphthoyl-CoA synthase (271 aa).

Substrate-binding positions include 71–75 (SGGDQ), Tyr-83, 115–119 (YAIGG), Thr-141, Ser-147, Tyr-244, and Lys-259. 140 to 142 (QTG) is a hydrogencarbonate binding site. The span at 250-263 (KEGRDSFKEKRKPD) shows a compositional bias: basic and acidic residues. Residues 250–271 (KEGRDSFKEKRKPDFGQFPRFP) are disordered.

This sequence belongs to the enoyl-CoA hydratase/isomerase family. MenB subfamily. Requires hydrogencarbonate as cofactor.

The catalysed reaction is 2-succinylbenzoyl-CoA + H(+) = 1,4-dihydroxy-2-naphthoyl-CoA + H2O. The protein operates within quinol/quinone metabolism; 1,4-dihydroxy-2-naphthoate biosynthesis; 1,4-dihydroxy-2-naphthoate from chorismate: step 6/7. It functions in the pathway quinol/quinone metabolism; menaquinone biosynthesis. Its function is as follows. Converts o-succinylbenzoyl-CoA (OSB-CoA) to 1,4-dihydroxy-2-naphthoyl-CoA (DHNA-CoA). This is 1,4-dihydroxy-2-naphthoyl-CoA synthase from Bacillus subtilis (strain 168).